The chain runs to 143 residues: Ribonuclease H (143 aa).

Residues 1 to 140 (MKVEIYTDGA…VDALANLGIE (140 aa)) form the RNase H type-1 domain. Residues D8, E46, D68, and D132 each coordinate Mg(2+).

It belongs to the RNase H family. In terms of assembly, monomer. Requires Mg(2+) as cofactor.

The protein resides in the cytoplasm. It carries out the reaction Endonucleolytic cleavage to 5'-phosphomonoester.. Functionally, endonuclease that specifically degrades the RNA of RNA-DNA hybrids. The protein is Ribonuclease H of Legionella pneumophila (strain Lens).